A 341-amino-acid chain; its full sequence is Holliday junction branch migration complex subunit RuvB (341 aa).

The large ATPase domain (RuvB-L) stretch occupies residues 1–180 (MAKSHTLNPE…FGIQLRLDYY (180 aa)). L19, R20, G61, K64, T65, T66, R170, Y180, and R217 together coordinate ATP. Residue T65 participates in Mg(2+) binding. Positions 181–251 (NDEEMKQIVL…LCLKAFEKMG (71 aa)) are small ATPAse domain (RuvB-S). The interval 254 to 341 (DLGLDGMDRQ…VHHGQDPTLF (88 aa)) is head domain (RuvB-H). R309 and R314 together coordinate DNA.

Belongs to the RuvB family. Homohexamer. Forms an RuvA(8)-RuvB(12)-Holliday junction (HJ) complex. HJ DNA is sandwiched between 2 RuvA tetramers; dsDNA enters through RuvA and exits via RuvB. An RuvB hexamer assembles on each DNA strand where it exits the tetramer. Each RuvB hexamer is contacted by two RuvA subunits (via domain III) on 2 adjacent RuvB subunits; this complex drives branch migration. In the full resolvosome a probable DNA-RuvA(4)-RuvB(12)-RuvC(2) complex forms which resolves the HJ.

The protein resides in the cytoplasm. The enzyme catalyses ATP + H2O = ADP + phosphate + H(+). The RuvA-RuvB-RuvC complex processes Holliday junction (HJ) DNA during genetic recombination and DNA repair, while the RuvA-RuvB complex plays an important role in the rescue of blocked DNA replication forks via replication fork reversal (RFR). RuvA specifically binds to HJ cruciform DNA, conferring on it an open structure. The RuvB hexamer acts as an ATP-dependent pump, pulling dsDNA into and through the RuvAB complex. RuvB forms 2 homohexamers on either side of HJ DNA bound by 1 or 2 RuvA tetramers; 4 subunits per hexamer contact DNA at a time. Coordinated motions by a converter formed by DNA-disengaged RuvB subunits stimulates ATP hydrolysis and nucleotide exchange. Immobilization of the converter enables RuvB to convert the ATP-contained energy into a lever motion, pulling 2 nucleotides of DNA out of the RuvA tetramer per ATP hydrolyzed, thus driving DNA branch migration. The RuvB motors rotate together with the DNA substrate, which together with the progressing nucleotide cycle form the mechanistic basis for DNA recombination by continuous HJ branch migration. Branch migration allows RuvC to scan DNA until it finds its consensus sequence, where it cleaves and resolves cruciform DNA. The chain is Holliday junction branch migration complex subunit RuvB from Leptospira interrogans serogroup Icterohaemorrhagiae serovar copenhageni (strain Fiocruz L1-130).